A 120-amino-acid polypeptide reads, in one-letter code: Small cysteine and glycine repeat-containing protein 2 (120 aa).

The tract at residues 4 to 104 is 19 X 2 AA repeats of CG; sequence CGCGGCGGCG…TCHSCGCGCG (101 aa).

This sequence belongs to the KRTAP type 28 family.

In terms of biological role, in the hair cortex, hair keratin intermediate filaments are embedded in an interfilamentous matrix, consisting of hair keratin-associated proteins (KRTAP), which are essential for the formation of a rigid and resistant hair shaft through their extensive disulfide bond cross-linking with abundant cysteine residues of hair keratins. The matrix proteins include the high-sulfur and high-glycine-tyrosine keratins. This chain is Small cysteine and glycine repeat-containing protein 2, found in Homo sapiens (Human).